The primary structure comprises 549 residues: Cytochrome bc1 complex cytochrome b subunit (549 aa).

A helical membrane pass occupies residues Phe45–Leu65. The heme site is built by His114 and His128. Transmembrane regions (helical) follow at residues Ala118–Phe138, Trp146–Leu166, and Val189–Ile209. The heme site is built by His216 and His231. A run of 5 helical transmembrane segments spans residues Ile217–Phe237, Ser266–Ile286, Pro335–Leu355, Ile381–Ile401, and Ile418–Leu438.

It belongs to the cytochrome b family. As to quaternary structure, the cytochrome bc1 complex is composed of a cytochrome b (QcrB), the Rieske iron-sulfur protein (QcrA) and a diheme cytochrome c (QcrC) subunit. Requires heme as cofactor.

It is found in the cell membrane. The enzyme catalyses a quinol + 2 Fe(III)-[cytochrome c](out) = a quinone + 2 Fe(II)-[cytochrome c](out) + 2 H(+)(out). In terms of biological role, cytochrome b subunit of the cytochrome bc1 complex, an essential component of the respiratory electron transport chain required for ATP synthesis. The bc1 complex catalyzes the oxidation of ubiquinol and the reduction of cytochrome c in the respiratory chain. The bc1 complex operates through a Q-cycle mechanism that couples electron transfer to generation of the proton gradient that drives ATP synthesis. The cytochrome b subunit contains two ubiquinol reactive sites: the oxidation (QP) site and the reduction (QN) site. The sequence is that of Cytochrome bc1 complex cytochrome b subunit (qcrB) from Mycobacterium bovis (strain ATCC BAA-935 / AF2122/97).